Here is a 404-residue protein sequence, read N- to C-terminus: Tryptophan synthase beta chain (404 aa).

K94 is subject to N6-(pyridoxal phosphate)lysine.

The protein belongs to the TrpB family. As to quaternary structure, tetramer of two alpha and two beta chains. Requires pyridoxal 5'-phosphate as cofactor.

It carries out the reaction (1S,2R)-1-C-(indol-3-yl)glycerol 3-phosphate + L-serine = D-glyceraldehyde 3-phosphate + L-tryptophan + H2O. Its pathway is amino-acid biosynthesis; L-tryptophan biosynthesis; L-tryptophan from chorismate: step 5/5. Functionally, the beta subunit is responsible for the synthesis of L-tryptophan from indole and L-serine. This is Tryptophan synthase beta chain from Staphylococcus aureus (strain JH1).